The sequence spans 701 residues: E3 ubiquitin-protein ligase RNF19B (701 aa).

The tract at residues 1–97 (MGSEKDSESP…PAEPLSTSQA (97 aa)) is disordered. Residues 1–304 (MGSEKDSESP…VCGCEFCWLC (304 aa)) are required for ubiquitin ligase activity and for protection against staurosporin-induced cell death. The segment covering 57-72 (QQLHQQQQIQQQQLLQ) has biased composition (low complexity). The tract at residues 103–323 (ELLECPLCLV…LSPSGCTFWG (221 aa)) is TRIAD supradomain. Cys-107, Cys-110, Cys-130, Cys-133, Cys-194, Cys-199, Cys-216, Cys-221, Cys-226, Cys-229, His-234, Cys-239, Cys-273, and Cys-276 together coordinate Zn(2+). An RING-type 1 zinc finger spans residues 107 to 156 (CPLCLVRQPAEQLPELQGCSHRSCLCCLRQYLRIEITESRVQLSCPECAE). The IBR-type zinc-finger motif lies at 174–239 (EKYEEFLLRR…KQAWHPNQTC (66 aa)). The RING-type 2; atypical zinc-finger motif lies at 273 to 304 (CPRCGAYIIKMNDGSCNHMTCAVCGCEFCWLC). Cys-288 is a catalytic residue. Positions 293, 296, 301, 304, 312, and 319 each coordinate Zn(2+). A run of 2 helical transmembrane segments spans residues 340–360 (LIGA…AMVI) and 396–416 (IITA…IMLA). 2 disordered regions span residues 472-495 (LEGA…PGGL) and 658-677 (AELT…HGAP).

Belongs to the RBR family. RNF19 subfamily. In terms of assembly, interacts with UBE2L3, UBE2L6 and UCKL1.

Its subcellular location is the cytoplasmic granule membrane. It is found in the endoplasmic reticulum membrane. The catalysed reaction is [E2 ubiquitin-conjugating enzyme]-S-ubiquitinyl-L-cysteine + [acceptor protein]-L-lysine = [E2 ubiquitin-conjugating enzyme]-L-cysteine + [acceptor protein]-N(6)-ubiquitinyl-L-lysine.. It functions in the pathway protein modification; protein ubiquitination. E3 ubiquitin-protein ligase which accepts ubiquitin from E2 ubiquitin-conjugating enzymes UBE2L3 and UBE2L6 in the form of a thioester and then directly transfers the ubiquitin to targeted substrates, such as UCKL1. Involved in the cytolytic activity of natural killer cells and cytotoxic T-cells. Protects against staurosporin-induced cell death. This Danio rerio (Zebrafish) protein is E3 ubiquitin-protein ligase RNF19B (rnf19b).